The following is a 236-amino-acid chain: Large ribosomal subunit protein eL6 (236 aa).

It belongs to the eukaryotic ribosomal protein eL6 family.

This Dictyostelium discoideum (Social amoeba) protein is Large ribosomal subunit protein eL6 (rpl6).